The primary structure comprises 258 residues: UPF0246 protein YaaA (258 aa).

This sequence belongs to the UPF0246 family.

The polypeptide is UPF0246 protein YaaA (Escherichia coli O7:K1 (strain IAI39 / ExPEC)).